A 140-amino-acid polypeptide reads, in one-letter code: L-fucose mutarotase (140 aa).

H22 functions as the Proton donor in the catalytic mechanism. Substrate contacts are provided by residues D30, R107, and 129-131 (YGN).

Belongs to the RbsD / FucU family. FucU mutarotase subfamily. Homodecamer.

It localises to the cytoplasm. The catalysed reaction is alpha-L-fucose = beta-L-fucose. It functions in the pathway carbohydrate metabolism; L-fucose metabolism. Involved in the anomeric conversion of L-fucose. This is L-fucose mutarotase from Citrobacter koseri (strain ATCC BAA-895 / CDC 4225-83 / SGSC4696).